The sequence spans 131 residues: UPF0102 protein YraN (131 aa).

Residues 1–19 (MATVPTRSGSPRQLTTKQT) show a composition bias toward polar residues. The disordered stretch occupies residues 1 to 21 (MATVPTRSGSPRQLTTKQTGD).

It belongs to the UPF0102 family.

The chain is UPF0102 protein YraN from Escherichia coli (strain K12 / MC4100 / BW2952).